Here is a 347-residue protein sequence, read N- to C-terminus: DNA-directed RNA polymerase subunit alpha (347 aa).

An alpha N-terminal domain (alpha-NTD) region spans residues 1–243 (MLIKQGDRLI…DQISVFINFD (243 aa)). An alpha C-terminal domain (alpha-CTD) region spans residues 260–347 (FNEHLFKSID…EWKRKQQHEA (88 aa)).

Belongs to the RNA polymerase alpha chain family. As to quaternary structure, homodimer. The RNAP catalytic core consists of 2 alpha, 1 beta, 1 beta' and 1 omega subunit. When a sigma factor is associated with the core the holoenzyme is formed, which can initiate transcription.

It carries out the reaction RNA(n) + a ribonucleoside 5'-triphosphate = RNA(n+1) + diphosphate. In terms of biological role, DNA-dependent RNA polymerase catalyzes the transcription of DNA into RNA using the four ribonucleoside triphosphates as substrates. This chain is DNA-directed RNA polymerase subunit alpha, found in Nitratidesulfovibrio vulgaris (strain ATCC 29579 / DSM 644 / CCUG 34227 / NCIMB 8303 / VKM B-1760 / Hildenborough) (Desulfovibrio vulgaris).